Reading from the N-terminus, the 72-residue chain is Translation initiation factor IF-1 (72 aa).

Positions 1–72 (MAKDDVIEID…DKGRITFRYK (72 aa)) constitute an S1-like domain.

The protein belongs to the IF-1 family. As to quaternary structure, component of the 30S ribosomal translation pre-initiation complex which assembles on the 30S ribosome in the order IF-2 and IF-3, IF-1 and N-formylmethionyl-tRNA(fMet); mRNA recruitment can occur at any time during PIC assembly.

Its subcellular location is the cytoplasm. In terms of biological role, one of the essential components for the initiation of protein synthesis. Stabilizes the binding of IF-2 and IF-3 on the 30S subunit to which N-formylmethionyl-tRNA(fMet) subsequently binds. Helps modulate mRNA selection, yielding the 30S pre-initiation complex (PIC). Upon addition of the 50S ribosomal subunit IF-1, IF-2 and IF-3 are released leaving the mature 70S translation initiation complex. The polypeptide is Translation initiation factor IF-1 (Sulfurovum sp. (strain NBC37-1)).